The primary structure comprises 457 residues: UDP-glycosyltransferase 72C1 (457 aa).

UDP-alpha-D-glucose-binding positions include S272, 343–344 (WA), 361–369 (HCGWNSVLE), and 383–386 (YSEQ).

It belongs to the UDP-glycosyltransferase family.

This is UDP-glycosyltransferase 72C1 (UGT72C1) from Arabidopsis thaliana (Mouse-ear cress).